The sequence spans 511 residues: Glucose-6-phosphate 1-dehydrogenase, cytoplasmic isoform (511 aa).

Residues 36-43 (GASGDLAK), R71, Y151, and K178 each bind NADP(+). D-glucose 6-phosphate-binding positions include K178, 208 to 212 (HYLGK), E246, and D265. Catalysis depends on H270, which acts as the Proton acceptor. NADP(+) is bound at residue K353. Residues K356 and R361 each coordinate D-glucose 6-phosphate. Residues K362, R366, and R390 each contribute to the NADP(+) site. D-glucose 6-phosphate is bound at residue Q392. Residues 398–400 (YMK), 418–420 (DLS), R484, and W506 each bind NADP(+).

This sequence belongs to the glucose-6-phosphate dehydrogenase family. In terms of assembly, homotetramer. Found in tubers, stolons, roots, and flower buds.

The protein resides in the cytoplasm. It carries out the reaction D-glucose 6-phosphate + NADP(+) = 6-phospho-D-glucono-1,5-lactone + NADPH + H(+). It participates in carbohydrate degradation; pentose phosphate pathway; D-ribulose 5-phosphate from D-glucose 6-phosphate (oxidative stage): step 1/3. Its activity is regulated as follows. Regulated by metabolites. Functionally, catalyzes the rate-limiting step of the oxidative pentose-phosphate pathway, which represents a route for the dissimilation of carbohydrates besides glycolysis. The main function of this enzyme is to generate NADPH for reductive biosyntheses. In Solanum tuberosum (Potato), this protein is Glucose-6-phosphate 1-dehydrogenase, cytoplasmic isoform (G6PDH).